A 180-amino-acid chain; its full sequence is MPKPTKGPRLGGSSSHQKAILANLATSLFEHGRITTTEPKARALRPYAEKLITHAKKGALHNRREVLKKLRDKDVVHTLFAEIGPFFADRDGGYTRIIKIEARKGDNAPMAVIELVREKTVTSEANRARRVAAAQAKAKKAAAMPTEESEAKPAEEGDVVGASEPDAKAPEEPPAEAPEN.

A disordered region spans residues alanine 134–asparagine 180.

It belongs to the bacterial ribosomal protein bL17 family. In terms of assembly, part of the 50S ribosomal subunit. Contacts protein L32.

This chain is Large ribosomal subunit protein bL17, found in Mycobacterium tuberculosis (strain ATCC 25177 / H37Ra).